The chain runs to 428 residues: Spliceosome RNA helicase DDX39B (428 aa).

A compositionally biased stretch (acidic residues) spans 1-19; the sequence is MAENDVDNELLDYEEDEVE. A disordered region spans residues 1 to 32; that stretch reads MAENDVDNELLDYEEDEVETAAGGDGSEAPAK. Position 2 is an N-acetylalanine (alanine 2). N6-acetyllysine; alternate is present on lysine 36. A Glycyl lysine isopeptide (Lys-Gly) (interchain with G-Cter in SUMO2); alternate cross-link involves residue lysine 36. Residues serine 38 and serine 41 each carry the phosphoserine modification. The short motif at 45–73 is the Q motif element; sequence SGFRDFLLKPELLRAIVDCGFEHPSEVQH. Residues 76–249 form the Helicase ATP-binding domain; it reads IPQAILGMDV…RKFMQDPMEI (174 aa). 89-96 serves as a coordination point for ATP; it reads AKSGMGKT. Position 172 is a phosphothreonine (threonine 172). The DECD box signature appears at 196-199; it reads DECD. Residues 261–422 form the Helicase C-terminal domain; that stretch reads GLQQYYVKLK…ELPDEIDISS (162 aa).

The protein belongs to the DEAD box helicase family. DECD subfamily. Homodimer, and heterodimer with DDX39A. DDX39B interacts with the THO subcomplex to form the THO-DDX39B complex which multimerizes into a 28-subunit tetrameric assembly. Component of the transcription/export (TREX) complex at least composed of ALYREF/THOC4, DDX39B, SARNP/CIP29, CHTOP and the THO subcomplex; in the complex interacts with THOC2. THOC1-THOC2-THOC3-DDX39B subcomplex is sufficient for the interaction with export factor NXF1-NXT1. TREX seems to have a dynamic structure involving ATP-dependent remodeling. Within the TREX complex bridges ALYREF/THOC4 and the THO subcomplex, and, in a ATP-dependent manner, ALYREF/THOC4 and SARNP/CIP29. Component of the spliceosome. Interacts directly with U2AF2. Interacts with RBM8A, RNPS1 and SRRM1, FYTTD1/UIF, THOC1, MX1 and POLDIP3. Interacts with LUZP4. Interacts with SARNP/CIP29 (via the C-terminal domain); the interaction is direct and facilitates RNA binding of DDX39B.

It localises to the nucleus. The protein localises to the nucleus speckle. Its subcellular location is the cytoplasm. It carries out the reaction ATP + H2O = ADP + phosphate + H(+). Its function is as follows. Involved in nuclear export of spliced and unspliced mRNA. Component of the TREX complex which is thought to couple mRNA transcription, processing and nuclear export, and specifically associates with spliced mRNA and not with unspliced pre-mRNA. The TREX complex is recruited to spliced mRNAs by a transcription-independent mechanism, binds to mRNA upstream of the exon-junction complex (EJC) and is recruited in a splicing- and cap-dependent manner to a region near the 5' end of the mRNA where it functions in mRNA export to the cytoplasm via the TAP/NXF1 pathway. The THOC1-THOC2-THOC3 core complex alone is sufficient to promote ATPase activity of DDX39B; in the complex THOC2 is the only component that directly interacts with DDX39B. Associates with SARNP/CIP29, which facilitates RNA binding of DDX39B and likely plays a role in mRNA export. May undergo several rounds of ATP hydrolysis during assembly of TREX to drive subsequent loading of components such as ALYREF/THOC4 and CHTOP onto mRNA. Also associates with pre-mRNA independent of ALYREF/THOC4. Involved in the nuclear export of intronless mRNA; the ATP-bound form is proposed to recruit export adapter ALYREF/THOC4 to intronless mRNA; its ATPase activity is cooperatively stimulated by RNA and ALYREF/THOC4 and ATP hydrolysis is thought to trigger the dissociation from RNA to allow the association of ALYREF/THOC4 and the NXF1-NXT1 heterodimer. Involved in transcription elongation and genome stability. In terms of biological role, splice factor that is required for the first ATP-dependent step in spliceosome assembly and for the interaction of U2 snRNP with the branchpoint. Has both RNA-stimulated ATP binding/hydrolysis activity and ATP-dependent RNA unwinding activity. Even with the stimulation of RNA, the ATPase activity is weak. Can only hydrolyze ATP but not other NTPs. The RNA stimulation of ATPase activity does not have a strong preference for the sequence and length of the RNA. However, ssRNA stimulates the ATPase activity much more strongly than dsRNA. Can unwind 5' or 3' overhangs or blunt end RNA duplexes in vitro. The ATPase and helicase activities are not influenced by U2AF2; the effect of ALYREF/THOC4 is reported conflictingly. The polypeptide is Spliceosome RNA helicase DDX39B (DDX39B) (Canis lupus familiaris (Dog)).